The primary structure comprises 380 residues: Alkanesulfonate monooxygenase (380 aa).

The protein belongs to the SsuD family. As to quaternary structure, homotetramer.

The enzyme catalyses an alkanesulfonate + FMNH2 + O2 = an aldehyde + FMN + sulfite + H2O + 2 H(+). Its function is as follows. Catalyzes the desulfonation of aliphatic sulfonates. This Pectobacterium carotovorum subsp. carotovorum (strain PC1) protein is Alkanesulfonate monooxygenase.